The sequence spans 267 residues: Ribosomal RNA small subunit methyltransferase A (267 aa).

S-adenosyl-L-methionine contacts are provided by N13, L15, G39, E59, D87, and N106.

This sequence belongs to the class I-like SAM-binding methyltransferase superfamily. rRNA adenine N(6)-methyltransferase family. RsmA subfamily.

The protein localises to the cytoplasm. The catalysed reaction is adenosine(1518)/adenosine(1519) in 16S rRNA + 4 S-adenosyl-L-methionine = N(6)-dimethyladenosine(1518)/N(6)-dimethyladenosine(1519) in 16S rRNA + 4 S-adenosyl-L-homocysteine + 4 H(+). Its function is as follows. Specifically dimethylates two adjacent adenosines (A1518 and A1519) in the loop of a conserved hairpin near the 3'-end of 16S rRNA in the 30S particle. May play a critical role in biogenesis of 30S subunits. The polypeptide is Ribosomal RNA small subunit methyltransferase A (Sulfurimonas denitrificans (strain ATCC 33889 / DSM 1251) (Thiomicrospira denitrificans (strain ATCC 33889 / DSM 1251))).